The primary structure comprises 248 residues: UPF0651 protein YPL107W, mitochondrial (248 aa).

Residues 1 to 26 (MIRNQGWSLLYRIYPVRRFTRYSRVD) constitute a mitochondrion transit peptide. One can recognise an Oxidoreductase-like domain in the interval 69 to 116 (KKIAGVQVPAKPQEPDNCCMSGCVNCVWEIYSEDLRDWKHRRKEAAEK).

This sequence belongs to the UPF0651 family.

The protein resides in the mitochondrion. In Saccharomyces cerevisiae (strain ATCC 204508 / S288c) (Baker's yeast), this protein is UPF0651 protein YPL107W, mitochondrial.